A 546-amino-acid chain; its full sequence is Mercuric reductase (546 aa).

An HMA domain is found at 2-66; the sequence is NKFKVNISGM…AIDEANYQAG (65 aa). The a metal cation site is built by cysteine 13 and cysteine 16. 3 residues coordinate FAD: alanine 96, glycine 116, and threonine 121. A disulfide bridge links cysteine 122 with cysteine 127. FAD contacts are provided by lysine 131 and alanine 195. NAD(+)-binding positions include 256-263 and glycine 346; that span reads GSGYIGME. Residues aspartate 387 and valine 395 each contribute to the FAD site. Positions 543 and 544 each coordinate Hg(2+).

This sequence belongs to the class-I pyridine nucleotide-disulfide oxidoreductase family. In terms of assembly, homodimer. It depends on FAD as a cofactor.

The catalysed reaction is Hg + NADP(+) + H(+) = Hg(2+) + NADPH. With respect to regulation, uses NADPH as the preferred electron donor, but shows slight activity with NADH as well. Inhibited by Cu(2+), Cd(2+), Zn(2+) and Co(2+), with Cu(2+) showing the strongest inhibition. Enzyme activity is enhanced by b-mercaptoethanol and NaCl up to concentrations of 500 uM and 100 mM respectively, followed by inhibition at higher concentrations. In terms of biological role, resistance to Hg(2+) in bacteria appears to be governed by a specialized system which includes mercuric reductase. MerA protein is responsible for volatilizing mercury as Hg(0). Catalyzes reduction of Hg(2+) to elemental Hg, which is volatile and can diffuse out of cells passively. Plays a pivotal role in mercury resistance and cell protection. In Lysinibacillus sphaericus (Bacillus sphaericus), this protein is Mercuric reductase.